Reading from the N-terminus, the 552-residue chain is Lon protease 2 (552 aa).

97–104 (GPPGVGKT) provides a ligand contact to ATP. In terms of domain architecture, Lon proteolytic spans 349 to 535 (EPQVGIVNGL…QEVLDEILVN (187 aa)). Residues S445 and K488 contribute to the active site.

It belongs to the peptidase S16 family. Homohexamer. Organized in a ring with a central cavity.

The protein resides in the cytoplasm. The enzyme catalyses Hydrolysis of proteins in presence of ATP.. Functionally, ATP-dependent serine protease that mediates the selective degradation of mutant and abnormal proteins as well as certain short-lived regulatory proteins. Required for cellular homeostasis and for survival from DNA damage and developmental changes induced by stress. Degrades polypeptides processively to yield small peptide fragments that are 5 to 10 amino acids long. Binds to DNA in a double-stranded, site-specific manner. This chain is Lon protease 2 (lon2), found in Bacillus subtilis (strain 168).